The following is a 620-amino-acid chain: Magnesium-chelatase 67 kDa subunit (620 aa).

ATP is bound at residue 33–40; that stretch reads STVGSGKS. The tract at residues 272 to 322 is disordered; that stretch reads ATRMPEREPNPEEMAQDEPPPQEEQPQDEAEDQNAPPDEADSDADEEQEET. Acidic residues predominate over residues 296–322; the sequence is QPQDEAEDQNAPPDEADSDADEEQEET. The VWFA domain occupies 432–620; that stretch reads LFIFMVDASG…AEQIVEAALS (189 aa).

It belongs to the Mg-chelatase subunits D/I family.

The catalysed reaction is protoporphyrin IX + Mg(2+) + ATP + H2O = Mg-protoporphyrin IX + ADP + phosphate + 3 H(+). It participates in porphyrin-containing compound metabolism; bacteriochlorophyll biosynthesis. Its function is as follows. Involved in bacteriochlorophyll biosynthesis; introduces a magnesium ion into protoporphyrin IX to yield Mg-protoporphyrin IX. This chain is Magnesium-chelatase 67 kDa subunit (bchD), found in Chlorobaculum tepidum (strain ATCC 49652 / DSM 12025 / NBRC 103806 / TLS) (Chlorobium tepidum).